The following is a 310-amino-acid chain: p-hydroxybenzoic acid efflux pump subunit AaeA (310 aa).

Residues 12 to 32 (AITLVLVILAFIAIFRAWVYY) form a helical membrane-spanning segment.

It belongs to the membrane fusion protein (MFP) (TC 8.A.1) family.

It localises to the cell inner membrane. Forms an efflux pump with AaeB. The protein is p-hydroxybenzoic acid efflux pump subunit AaeA of Salmonella schwarzengrund (strain CVM19633).